The primary structure comprises 504 residues: Cytochrome P450 2S1 (504 aa).

Heme is bound at residue Cys440.

The protein belongs to the cytochrome P450 family. Requires heme as cofactor. As to expression, expressed at higher levels in extrahepatic tissues including trachea, lung, stomach, small intestine, colon, kidney, breast, placenta and spleen. Expressed in peripheral blood leukocytes. Constitutively expressed in skin (at protein level).

The protein resides in the endoplasmic reticulum membrane. The protein localises to the microsome membrane. It carries out the reaction all-trans-retinoate + reduced [NADPH--hemoprotein reductase] + O2 = all-trans-5,6-epoxyretinoate + oxidized [NADPH--hemoprotein reductase] + H2O + H(+). It catalyses the reaction all-trans-retinoate + reduced [NADPH--hemoprotein reductase] + O2 = all-trans-4-hydroxyretinoate + oxidized [NADPH--hemoprotein reductase] + H2O + H(+). The catalysed reaction is (5S)-hydroperoxy-(6E,8Z,11Z,14Z)-eicosatetraenoate = 5-oxo-(6E,8Z,11Z,14Z)-eicosatetraenoate + H2O. The enzyme catalyses (12S)-hydroperoxy-(5Z,8Z,10E,14Z)-eicosatetraenoate = 12-oxo-(5Z,8Z,10E,14Z)-eicosatetraenoate + H2O. It carries out the reaction (15S)-hydroperoxy-(5Z,8Z,11Z,13E)-eicosatetraenoate = 15-oxo-(5Z,8Z,11Z,13E)-eicosatetraenoate + H2O. It catalyses the reaction prostaglandin H2 = thromboxane A2. The catalysed reaction is prostaglandin H2 = (12S)-hydroxy-(5Z,8E,10E)-heptadecatrienoate + malonaldehyde. The enzyme catalyses (13S)-hydroperoxy-(9Z,11E)-octadecadienoate = 13-oxo-(9Z,11E)-octadecadienoate + H2O. The protein operates within lipid metabolism; fatty acid metabolism. Functionally, a cytochrome P450 monooxygenase involved in the metabolism of retinoids and eicosanoids. In epidermis, may contribute to the oxidative metabolism of all-trans-retinoic acid. For this activity, uses molecular oxygen inserting one oxygen atom into a substrate, and reducing the second into a water molecule, with two electrons provided by NADPH via cytochrome P450 reductase (NADPH--hemoprotein reductase). Additionally, displays peroxidase and isomerase activities toward various oxygenated eicosanoids such as prostaglandin H2 (PGH2) and hydroperoxyeicosatetraenoates (HPETEs). Independently of cytochrome P450 reductase, NADPH, and O2, catalyzes the breakdown of PGH2 to hydroxyheptadecatrienoic acid (HHT) and malondialdehyde (MDA), which is known to act as a mediator of DNA damage. This Homo sapiens (Human) protein is Cytochrome P450 2S1.